The following is a 279-amino-acid chain: Putative hydro-lyase GDI0188/Gdia_2258 (279 aa).

The protein belongs to the D-glutamate cyclase family.

The chain is Putative hydro-lyase GDI0188/Gdia_2258 from Gluconacetobacter diazotrophicus (strain ATCC 49037 / DSM 5601 / CCUG 37298 / CIP 103539 / LMG 7603 / PAl5).